Reading from the N-terminus, the 293-residue chain is N(1)-aminopropylagmatine ureohydrolase (293 aa).

Residues His105, Asp128, His130, Asp132, Asp210, and Asp212 each coordinate Mn(2+).

The protein belongs to the arginase family. Mn(2+) is required as a cofactor.

Its subcellular location is the cytoplasm. It catalyses the reaction N(1)-(3-aminopropyl)agmatine + H2O = urea + spermidine. The protein operates within amine and polyamine biosynthesis; spermidine biosynthesis. Functionally, involved in the biosynthesis of polyamines which are thought to support the growth of thermophilic microorganisms under high-temperature conditions. It seems that long-chain and branched-chain of polyamines effectively stabilize DNA and RNA, respectively. Catalyzes the decarboxylation of N1-(3-aminopropyl)agmatine to yield spermidine and urea. It cannot use agmatine as substrate. The protein is N(1)-aminopropylagmatine ureohydrolase of Thermus thermophilus (strain ATCC 27634 / DSM 579 / HB8).